Here is a 1187-residue protein sequence, read N- to C-terminus: DNA-directed RNA polymerase subunit beta (1187 aa).

Belongs to the RNA polymerase beta chain family. In terms of assembly, the RNAP catalytic core consists of 2 alpha, 1 beta, 1 beta' and 1 omega subunit. When a sigma factor is associated with the core the holoenzyme is formed, which can initiate transcription.

The enzyme catalyses RNA(n) + a ribonucleoside 5'-triphosphate = RNA(n+1) + diphosphate. Functionally, DNA-dependent RNA polymerase catalyzes the transcription of DNA into RNA using the four ribonucleoside triphosphates as substrates. The sequence is that of DNA-directed RNA polymerase subunit beta from Streptococcus mutans serotype c (strain ATCC 700610 / UA159).